The chain runs to 397 residues: L-rhamnonate dehydratase (397 aa).

Positions 25 and 51 each coordinate substrate. Mg(2+)-binding residues include D217, E243, and E271. Residue H321 is the Proton acceptor of the active site. E341 is a binding site for substrate.

This sequence belongs to the mandelate racemase/muconate lactonizing enzyme family. RhamD subfamily. Homooctamer; tetramer of dimers. It depends on Mg(2+) as a cofactor.

It carries out the reaction L-rhamnonate = 2-dehydro-3-deoxy-L-rhamnonate + H2O. It participates in carbohydrate degradation; L-rhamnose degradation. Catalyzes the dehydration of L-rhamnonate to 2-keto-3-deoxy-L-rhamnonate (KDR). Also shows activity with L-lyxonate and L-mannonate, with much lower catalytic efficiency. Catalyzes the third step in an alternative pathway for rhamnose utilization that does not involve phosphorylated intermediates. This Sphingomonas sp. (strain SKA58) protein is L-rhamnonate dehydratase.